We begin with the raw amino-acid sequence, 222 residues long: 3,4-dihydroxy-2-butanone 4-phosphate synthase (222 aa).

Residues 37-38 (RE), D42, 150-154 (RPGHT), and E174 each bind D-ribulose 5-phosphate. E38 lines the Mg(2+) pocket. Mg(2+) is bound at residue H153.

Belongs to the DHBP synthase family. In terms of assembly, homodimer. Mg(2+) serves as cofactor. Mn(2+) is required as a cofactor.

The enzyme catalyses D-ribulose 5-phosphate = (2S)-2-hydroxy-3-oxobutyl phosphate + formate + H(+). It participates in cofactor biosynthesis; riboflavin biosynthesis; 2-hydroxy-3-oxobutyl phosphate from D-ribulose 5-phosphate: step 1/1. Catalyzes the conversion of D-ribulose 5-phosphate to formate and 3,4-dihydroxy-2-butanone 4-phosphate. This chain is 3,4-dihydroxy-2-butanone 4-phosphate synthase, found in Chlorobium limicola (strain DSM 245 / NBRC 103803 / 6330).